Reading from the N-terminus, the 90-residue chain is UPF0297 protein lwe1516 (90 aa).

It belongs to the UPF0297 family.

In Listeria welshimeri serovar 6b (strain ATCC 35897 / DSM 20650 / CCUG 15529 / CIP 8149 / NCTC 11857 / SLCC 5334 / V8), this protein is UPF0297 protein lwe1516.